The chain runs to 143 residues: Large ribosomal subunit protein uL11 (143 aa).

It belongs to the universal ribosomal protein uL11 family. Part of the ribosomal stalk of the 50S ribosomal subunit. Interacts with L10 and the large rRNA to form the base of the stalk. L10 forms an elongated spine to which L12 dimers bind in a sequential fashion forming a multimeric L10(L12)X complex. Post-translationally, one or more lysine residues are methylated.

Forms part of the ribosomal stalk which helps the ribosome interact with GTP-bound translation factors. In Psychrobacter cryohalolentis (strain ATCC BAA-1226 / DSM 17306 / VKM B-2378 / K5), this protein is Large ribosomal subunit protein uL11.